The following is a 731-amino-acid chain: Two pore channel protein 2 (731 aa).

The Cytoplasmic segment spans residues 1-68; the sequence is MAAEEQPLLG…RWYYSNVCQR (68 aa). Residues 69–89 form a helical membrane-spanning segment; sequence VLGFIIFLILILAFVEVPSSF. Residues 90–111 lie on the Extracellular side of the membrane; it reads TKTADVRYRSQPWQPPCGLTET. A helical transmembrane segment spans residues 112 to 132; sequence IEAFCLLAFLVDLSVKGYLVG. Residues 133-139 lie on the Cytoplasmic side of the membrane; the sequence is QAQLQQN. Residues 140–160 traverse the membrane as a helical segment; the sequence is LWLLAYFMVLVVSVVDWIVSL. The Extracellular portion of the chain corresponds to 161-167; that stretch reads SLACEEP. A helical transmembrane segment spans residues 168-188; the sequence is LRMRRLLRPFFLLQNSSMMKK. An interaction with phosphatidylinositol 3,5-bisphosphate region spans residues 187–191; the sequence is KKTLK. At 189-203 the chain is on the cytoplasmic side; sequence TLKCIRWSLPEMASV. Residues 204 to 224 form a helical membrane-spanning segment; sequence GLLLAIHLCLFTIIGMLLFTI. Topologically, residues 225-238 are extracellular; it reads GEKDEAQDQERLAY. An intramembrane region (helical; Pore-forming) is located at residues 239–263; sequence FRNLPEALTSLLVLLTTSNNPDVMI. Residues 264–270 are Extracellular-facing; it reads PAYTQNR. A helical membrane pass occupies residues 271 to 291; it reads AFALFFIVFTLIGSLFLMNLL. At 292-417 the chain is on the cytoplasmic side; the sequence is TAIIYNQFRG…TAQFIFSHHY (126 aa). A helical membrane pass occupies residues 418 to 438; sequence FDYLGNLVALGNLLSICVFLV. At 439–449 the chain is on the extracellular side; that stretch reads LDSDLLPGERD. A helical membrane pass occupies residues 450–470; that stretch reads DFVLGILDYIFILYYLLELLF. Residues 471-486 lie on the Cytoplasmic side of the membrane; the sequence is KVFALGLPGYLSYHSN. Residues 487-507 traverse the membrane as a helical segment; that stretch reads VFDGLLTIILLVSEICTLAVY. Residues 508 to 524 are Extracellular-facing; sequence RLPHSGWKPEQYGPLSL. A helical transmembrane segment spans residues 525-542; it reads WDMTRLMNTLIVFRFLRI. At 543–564 the chain is on the cytoplasmic side; it reads IPNIKPMAEVANTILGLIPNLR. A helical transmembrane segment spans residues 565 to 585; it reads AFGGILVVAYYVFAMIGINLF. Residues 586 to 618 are Extracellular-facing; it reads RGVIVPPGNSSLVPDNNSAVCGSFEQLGYWPNN. Residues Asn594 and Asn601 are each glycosylated (N-linked (GlcNAc...) asparagine). An intramembrane region (helical; Pore-forming) is located at residues 619 to 641; sequence FDDFAAALITLWNVMVVNNWQVI. Residues 642-656 are Extracellular-facing; the sequence is LEAYKRYAGPWSMVY. The helical transmembrane segment at 657 to 677 threads the bilayer; the sequence is FVLWWLVSSVIWINLFLALLL. Over 678 to 731 the chain is Cytoplasmic; it reads ENFLHRWDPQGHKQLLVGTKQMSVELMFRDILEEPKEEELMEKLHKHPHLHLCR.

This sequence belongs to the calcium channel alpha-1 subunit (TC 1.A.1.11) family. Two pore calcium channel subfamily. In terms of assembly, homodimer. Interacts with LRRK2. Interacts with HAX1. Interacts with MTOR; the interaction is required for TPCN2 ATP sensitivity. Found in a complex with LSM12, TPCN1 and TPCN2. Interacts with LSM12. N-glycosylated. As to expression, widely expressed. Highly expressed in macrophages. Expressed in pigmented cells.

Its subcellular location is the late endosome membrane. It localises to the lysosome membrane. The protein resides in the melanosome membrane. The enzyme catalyses Ca(2+)(in) = Ca(2+)(out). It catalyses the reaction Na(+)(in) = Na(+)(out). Regulated by Mg(2+) ions, cytosolic Mg(2+) selectively inhibits outward current while lysosomal Mg(2+) modestly inhibits both the outward and inward currents. In the absence of Mg(2+), NAADP readily activates TPCN2, with properties similar to PI(3,5)P2. Na(+) current is inhibited by ATP in a MTORC-dependent manner. ATP sensitivity is independent of PI(3,5)P2. Both current elicited by PI(3,5)P2 as well as NAADP are inhibited by tetrandrine. Its function is as follows. Intracellular channel initially characterized as a non-selective Ca(2+)-permeable channel activated by NAADP (nicotinic acid adenine dinucleotide phosphate), it is also a highly-selective Na(+) channel activated directly by PI(3,5)P2 (phosphatidylinositol 3,5-bisphosphate). Localizes to the lysosomal and late endosome membranes where it regulates organellar membrane excitability, membrane trafficking, and pH homeostasis. Is associated with a plethora of physiological processes, including mTOR-dependent nutrient sensing, skin pigmentation and autophagy. Ion selectivity is not fixed but rather agonist-dependent and under defined ionic conditions, can be readily activated by both NAADP and PI(3,5)P2. As calcium channel, it increases the pH in the lysosomal lumen, as sodium channel, it promotes lysosomal exocytosis. Plays a crucial role in endolysosomal trafficking in the endolysosomal degradation pathway and is potentially involved in the homeostatic control of many macromolecules and cell metabolites. Also expressed in melanosomes of pigmented cells where mediates a Ca(2+) channel and/or PI(3,5)P2-activated melanosomal Na(+) channel to acidify pH and inhibit tyrosinase activity required for melanogenesis and pigmentation. Unlike the voltage-dependent TPCN1, TPCN2 is voltage independent and can be activated solely by PI(3,5)P2 binding. In contrast, PI(4,5)P2, PI(3,4)P2, PI(3)P and PI(5)P have no obvious effect on channel activation. Functionally, (Microbial infection) During Ebola virus (EBOV) infection, controls the movement of endosomes containing virus particles and is required by EBOV to escape from the endosomal network into the cell cytoplasm. The chain is Two pore channel protein 2 from Mus musculus (Mouse).